The sequence spans 448 residues: Hyaluronidase conohyal-Cn1 (448 aa).

An N-terminal signal peptide occupies residues 1–18; it reads MRAVVVVTGLVVVVVATA. A propeptide spanning residues 19–33 is cleaved from the precursor; the sequence is LSLPNHDVKSATSSR. Residues 26–55 are disordered; it reads VKSATSSRSSSDYQGSSGDDCDEGLPPPDQ. Low complexity predominate over residues 31-43; sequence SSRSSSDYQGSSG. An intrachain disulfide couples Cys-67 to Cys-344. Asn-141 carries N-linked (GlcNAc...) asparagine glycosylation. The active-site Proton donor is the Glu-151. N-linked (GlcNAc...) asparagine glycosylation is found at Asn-169 and Asn-361. 3 disulfide bridges follow: Cys-369–Cys-380, Cys-374–Cys-413, and Cys-415–Cys-424. An EGF-like domain is found at 413 to 424; sequence CRCYSAWEGACC.

Belongs to the glycosyl hydrolase 56 family. As to expression, expressed by the venom duct.

It localises to the secreted. The enzyme catalyses Random hydrolysis of (1-&gt;4)-linkages between N-acetyl-beta-D-glucosamine and D-glucuronate residues in hyaluronate.. In terms of biological role, hyaluronidase catalyzes the hydrolysis of hyaluronic acid (HA), an anionic, nonsulfated glycosaminoglycan distributed widely throughout connective, epithelial, and neural tissues. In venom, they are known to enhance diffusion of the venom by degrading the extracellular matrix. The chain is Hyaluronidase conohyal-Cn1 from Conus consors (Singed cone).